A 2282-amino-acid polypeptide reads, in one-letter code: Acetyl-CoA carboxylase (2282 aa).

Positions 16–515 constitute a Biotin carboxylation domain; that stretch reads NIEKILIANN…HTGWLDQLIS (500 aa). Residues 170–360 form the ATP-grasp domain; it reads YSECNGVPSE…LPATQLQIAM (191 aa). 196 to 253 lines the ATP pocket; sequence AQRVGFPAMIKASEGGGGKGIRKVTSMEDLESSFRQVQNEVPGSPIFFMKLVSNARHL. 3 residues coordinate Mn(2+): Glu319, Glu331, and Asn333. Residue Arg335 is part of the active site. Positions 646 to 720 constitute a Biotinyl-binding domain; the sequence is FSQEYDPSIL…APGAIIANLE (75 aa). The residue at position 687 (Lys687) is an N6-biotinyllysine. A compositionally biased stretch (low complexity) spans 1109-1129; that stretch reads GSNSGSPTYGSPLIRSISSSG. Residues 1109–1141 are disordered; it reads GSNSGSPTYGSPLIRSISSSGGSSGGSGFQISP. Residues 1495–1851 form the CoA carboxyltransferase N-terminal domain; the sequence is PYPIMDAVQR…SGGEMVPIIS (357 aa). Positions 1495–2178 are carboxyltransferase; that stretch reads PYPIMDAVQR…EEDKLKLIDK (684 aa). CoA-binding residues include Arg1761, Lys2068, and Arg2070. Positions 1852–2178 constitute a CoA carboxyltransferase C-terminal domain; that stretch reads PIDSPHRDIE…EEDKLKLIDK (327 aa).

Biotin serves as cofactor. It depends on Mn(2+) as a cofactor.

The protein localises to the cytoplasm. It catalyses the reaction hydrogencarbonate + acetyl-CoA + ATP = malonyl-CoA + ADP + phosphate + H(+). It carries out the reaction N(6)-biotinyl-L-lysyl-[protein] + hydrogencarbonate + ATP = N(6)-carboxybiotinyl-L-lysyl-[protein] + ADP + phosphate + H(+). The protein operates within lipid metabolism; malonyl-CoA biosynthesis; malonyl-CoA from acetyl-CoA: step 1/1. Functionally, catalyzes the rate-limiting reaction in the biogenesis of long-chain fatty acids. Carries out three functions: biotin carboxyl carrier protein, biotin carboxylase and carboxyltransferase. This Dictyostelium discoideum (Social amoeba) protein is Acetyl-CoA carboxylase (accA).